A 592-amino-acid polypeptide reads, in one-letter code: Neurogenic locus notch homolog protein (592 aa).

Residues 1–19 (MIFVLTLVALCTAIHCPDG) form the signal peptide. EGF-like domains follow at residues 64–104 (YPSI…DYQV), 106–146 (VPEA…EKCT), 267–307 (YPEA…NTCI), 353–387 (NSQTNPPQLCHSAGSCDFDTGVCSCNPTNSGPTCE), 453–488 (VPNSCVTASLIICSNRGTCTDGVCKCNEGYSGALCE), and 546–588 (IDGE…KHCN). Intrachain disulfides connect C68–C82, C76–C92, C110–C123, C117–C134, C136–C145, C271–C284, C278–C293, C295–C306, C362–C375, C377–C386, C457–C471, C478–C487, C550–C565, C555–C576, and C578–C587. N-linked (GlcNAc...) asparagine glycosylation occurs at N552.

The protein belongs to the NOTCH family. Interacts with EB1.

It localises to the cell projection. Its subcellular location is the cilium. It is found in the flagellum. The protein resides in the cytoplasm. The protein localises to the cytoskeleton. It localises to the flagellum axoneme. This chain is Neurogenic locus notch homolog protein, found in Giardia intestinalis (strain ATCC 50803 / WB clone C6) (Giardia lamblia).